Reading from the N-terminus, the 444-residue chain is SVGFKAGVKDYRLTYYTPEYQTKDTDILAAFRVTPQPGVPPEEAGAAVAAESSTGTWTTVWTDGLTSLDRYKGRCYDIEPVPGEENQFIAYVAYPLDLFEEGSVTNLFTSIVGNVFGFKALRALRLEDLRIPPAYSKTFQGPPHGIQVERDKLNKYGRPLLGCTIKPKLGLSAKNYGRAVYECLRGGLDFTKDDENVNSQPFMRWRDRFLFCAEAIYKAQTETGEIKGHYLNATAGTCEEMMKRAVFARELGVPIVMHDYLTGGFTANTSLAHYCRDNGLLLHIHRAMHAVIDRQRNHGMHFRVLAKALRMSGGDHIHAGTVVGKLEGEREVTLGFVDLLRDDFIEKDRSRGIYFTQDWVSMPGVLPVASGDIHVWHMPALTEIFGDDSVLQFGGGTLGHPWGNAPGAVANRVALEACVQARNEGRDLAREGNEVIREASKWSP.

Lys5 carries the post-translational modification N6,N6,N6-trimethyllysine. Substrate contacts are provided by Asn114 and Thr164. The active-site Proton acceptor is Lys166. Residue Lys168 participates in substrate binding. Mg(2+)-binding residues include Lys192, Asp194, and Glu195. Lys192 carries the post-translational modification N6-carboxylysine. His285 serves as the catalytic Proton acceptor. Substrate contacts are provided by Arg286, His318, and Ser370.

It belongs to the RuBisCO large chain family. Type I subfamily. As to quaternary structure, heterohexadecamer of 8 large chains and 8 small chains; disulfide-linked. The disulfide link is formed within the large subunit homodimers. Mg(2+) serves as cofactor. Post-translationally, the disulfide bond which can form in the large chain dimeric partners within the hexadecamer appears to be associated with oxidative stress and protein turnover.

The protein localises to the plastid. It localises to the chloroplast. The catalysed reaction is 2 (2R)-3-phosphoglycerate + 2 H(+) = D-ribulose 1,5-bisphosphate + CO2 + H2O. It catalyses the reaction D-ribulose 1,5-bisphosphate + O2 = 2-phosphoglycolate + (2R)-3-phosphoglycerate + 2 H(+). In terms of biological role, ruBisCO catalyzes two reactions: the carboxylation of D-ribulose 1,5-bisphosphate, the primary event in carbon dioxide fixation, as well as the oxidative fragmentation of the pentose substrate in the photorespiration process. Both reactions occur simultaneously and in competition at the same active site. The polypeptide is Ribulose bisphosphate carboxylase large chain (Ginkgo biloba (Ginkgo)).